A 457-amino-acid polypeptide reads, in one-letter code: tRNA modification GTPase MnmE (457 aa).

Arg-23, Glu-85, and Arg-124 together coordinate (6S)-5-formyl-5,6,7,8-tetrahydrofolate. One can recognise a TrmE-type G domain in the interval 220–376; it reads GALVVLAGQV…LVTAIRAAVL (157 aa). Residue Asn-230 coordinates K(+). GTP contacts are provided by residues 230-235, 249-255, and 274-277; these read NAGKSS, TDLPGTT, and DTAG. Mg(2+) is bound at residue Ser-234. K(+)-binding residues include Thr-249, Leu-251, and Thr-254. Thr-255 is a Mg(2+) binding site. Residue Lys-457 participates in (6S)-5-formyl-5,6,7,8-tetrahydrofolate binding.

This sequence belongs to the TRAFAC class TrmE-Era-EngA-EngB-Septin-like GTPase superfamily. TrmE GTPase family. As to quaternary structure, homodimer. Heterotetramer of two MnmE and two MnmG subunits. K(+) serves as cofactor.

Its subcellular location is the cytoplasm. Functionally, exhibits a very high intrinsic GTPase hydrolysis rate. Involved in the addition of a carboxymethylaminomethyl (cmnm) group at the wobble position (U34) of certain tRNAs, forming tRNA-cmnm(5)s(2)U34. The protein is tRNA modification GTPase MnmE of Nitratidesulfovibrio vulgaris (strain ATCC 29579 / DSM 644 / CCUG 34227 / NCIMB 8303 / VKM B-1760 / Hildenborough) (Desulfovibrio vulgaris).